The chain runs to 845 residues: Alanine--tRNA ligase (845 aa).

Zn(2+) is bound by residues His-552, His-556, Cys-653, and His-657.

The protein belongs to the class-II aminoacyl-tRNA synthetase family. Zn(2+) serves as cofactor.

Its subcellular location is the cytoplasm. The catalysed reaction is tRNA(Ala) + L-alanine + ATP = L-alanyl-tRNA(Ala) + AMP + diphosphate. In terms of biological role, catalyzes the attachment of alanine to tRNA(Ala) in a two-step reaction: alanine is first activated by ATP to form Ala-AMP and then transferred to the acceptor end of tRNA(Ala). Also edits incorrectly charged Ser-tRNA(Ala) and Gly-tRNA(Ala) via its editing domain. This is Alanine--tRNA ligase from Campylobacter hominis (strain ATCC BAA-381 / DSM 21671 / CCUG 45161 / LMG 19568 / NCTC 13146 / CH001A).